Here is a 599-residue protein sequence, read N- to C-terminus: Fructan 1-exohydrolase (599 aa).

The signal sequence occupies residues 1–16; it reads MAQAWAFLLLPALALA. The active site involves Asp78. Asn171, Asn239, and Asn251 each carry an N-linked (GlcNAc...) asparagine glycan. An intrachain disulfide couples Cys449 to Cys495.

Belongs to the glycosyl hydrolase 32 family.

It catalyses the reaction Hydrolysis of terminal, non-reducing (2-&gt;1)-linked beta-D-fructofuranose residues in fructans.. With respect to regulation, inhibited by sucrose. Its function is as follows. Hydrolyzes inulin-type beta-(2,1)-fructans. May play a role as a beta-(2,1)-trimmer during graminan biosynthesis. The protein is Fructan 1-exohydrolase of Hordeum vulgare (Barley).